Here is a 197-residue protein sequence, read N- to C-terminus: Xanthine phosphoribosyltransferase (197 aa).

Residues Leu20 and Asn27 each coordinate xanthine. 128-132 (ANGQA) contributes to the 5-phospho-alpha-D-ribose 1-diphosphate binding site. Lys156 contributes to the xanthine binding site.

It belongs to the purine/pyrimidine phosphoribosyltransferase family. Xpt subfamily. Homodimer.

The protein resides in the cytoplasm. The catalysed reaction is XMP + diphosphate = xanthine + 5-phospho-alpha-D-ribose 1-diphosphate. It participates in purine metabolism; XMP biosynthesis via salvage pathway; XMP from xanthine: step 1/1. In terms of biological role, converts the preformed base xanthine, a product of nucleic acid breakdown, to xanthosine 5'-monophosphate (XMP), so it can be reused for RNA or DNA synthesis. This chain is Xanthine phosphoribosyltransferase, found in Bacillus cereus (strain B4264).